We begin with the raw amino-acid sequence, 440 residues long: General transcription factor IIE subunit 1 (440 aa).

Alanine 2 is subject to N-acetylalanine. In terms of domain architecture, HTH TFE/IIEalpha-type spans 14 to 104 (LKRLAKYVIR…NYRTLVNVVK (91 aa)). An N6-acetyllysine modification is found at lysine 67. Zn(2+) is bound by residues cysteine 129, cysteine 132, cysteine 154, and cysteine 157. The C4-type zinc finger occupies 129–157 (CPVCCSTFTDLEANQLFDPMTGTFRCTFC). Serine 268 carries the phosphoserine modification. The span at 333–353 (SSVTAGSVGAAAPVTAANGSD) shows a compositional bias: low complexity. The segment at 333-395 (SSVTAGSVGA…EEFEEVADDP (63 aa)) is disordered. 2 stretches are compositionally biased toward acidic residues: residues 354–364 (SESETSESDDD) and 381–393 (EDEE…EVAD).

This sequence belongs to the TFIIE alpha subunit family. In terms of assembly, tetramer of two alpha and two beta chains. Interacts with TAF6/TAFII80. Interacts with ATF7IP. Interacts with SND1. Part of TBP-based Pol II pre-initiation complex (PIC), in which Pol II core assembles with general transcription factors and other specific initiation factors including GTF2E1, GTF2E2, GTF2F1, GTF2F2, TCEA1, ERCC2, ERCC3, GTF2H2, GTF2H3, GTF2H4, GTF2H5, GTF2A1, GTF2A2, GTF2B and TBP; this large multi-subunit PIC complex mediates DNA unwinding and targets Pol II core to the transcription start site where the first phosphodiester bond forms.

It is found in the nucleus. Recruits TFIIH to the initiation complex and stimulates the RNA polymerase II C-terminal domain kinase and DNA-dependent ATPase activities of TFIIH. Both TFIIH and TFIIE are required for promoter clearance by RNA polymerase. This is General transcription factor IIE subunit 1 (Gtf2e1) from Mus musculus (Mouse).